The following is a 104-amino-acid chain: Large ribosomal subunit protein uL24 (104 aa).

This sequence belongs to the universal ribosomal protein uL24 family. In terms of assembly, part of the 50S ribosomal subunit.

In terms of biological role, one of two assembly initiator proteins, it binds directly to the 5'-end of the 23S rRNA, where it nucleates assembly of the 50S subunit. Its function is as follows. One of the proteins that surrounds the polypeptide exit tunnel on the outside of the subunit. The polypeptide is Large ribosomal subunit protein uL24 (Salmonella paratyphi A (strain ATCC 9150 / SARB42)).